Consider the following 951-residue polypeptide: Sodium/potassium exporting P-type ATPase 1 (951 aa).

The Cytoplasmic portion of the chain corresponds to Met-1 to Val-57. A helical transmembrane segment spans residues Leu-58 to Phe-78. The Extracellular portion of the chain corresponds to Ala-79 to Asp-82. A helical transmembrane segment spans residues His-83–Gln-103. Residues Glu-104–Met-247 are Cytoplasmic-facing. A helical transmembrane segment spans residues Ala-248–Phe-268. Residues Glu-269–Asp-273 lie on the Extracellular side of the membrane. A helical transmembrane segment spans residues Ile-274 to Ile-294. At Thr-295–Lys-717 the chain is on the cytoplasmic side. Catalysis depends on Asp-330, which acts as the 4-aspartylphosphate intermediate. Residues Asp-330 and Thr-332 each contribute to the Mg(2+) site. Positions 332, 414, 467, 511, 575, 576, 577, 636, and 642 each coordinate ATP. Residue Asp-661 coordinates Mg(2+). An ATP-binding site is contributed by Asn-664. The chain crosses the membrane as a helical span at residues Phe-718–Ala-738. Residues Phe-739–Asn-743 are Extracellular-facing. The helical transmembrane segment at Gly-744–Thr-764 threads the bilayer. Residues Pro-765–Met-799 lie on the Cytoplasmic side of the membrane. A helical membrane pass occupies residues Val-800–Phe-820. The Extracellular segment spans residues Gly-821–Thr-840. The helical transmembrane segment at Val-841–Tyr-861 threads the bilayer. The Cytoplasmic portion of the chain corresponds to Asn-862–Arg-885. A helical membrane pass occupies residues Leu-886–Thr-906. The Extracellular segment spans residues Leu-907–Thr-916. Residues Ile-917–Leu-937 traverse the membrane as a helical segment. The Cytoplasmic segment spans residues Tyr-938–Ile-951.

It belongs to the cation transport ATPase (P-type) (TC 3.A.3) family. Type IID subfamily. Mg(2+) is required as a cofactor. Post-translationally, the active site is phosphorylated in presence of sodium or potassium and in conditions of higher pH. Not phosphorylated in presence of calcium ions.

It localises to the cell membrane. It catalyses the reaction Na(+)(in) + ATP + H2O = Na(+)(out) + ADP + phosphate + H(+). The catalysed reaction is K(+)(in) + ATP + H2O = K(+)(out) + ADP + phosphate + H(+). Catalyzes the hydrolysis of ATP coupled with the export of sodium and potassium from the cell. Appears to export potassium more efficiently than sodium. May transport other cations such as lithium. Sodium/potassium efflux ATPases are involved in salt tolerance and maintaining the membrane potential across the plasma membrane in high salinity (Na+) or alkaline (K+) environments. This Marchantia polymorpha (Common liverwort) protein is Sodium/potassium exporting P-type ATPase 1.